We begin with the raw amino-acid sequence, 207 residues long: Imidazole glycerol phosphate synthase subunit HisH (207 aa).

The Glutamine amidotransferase type-1 domain occupies 1–206 (MMIVIDYDAG…KEYVYENTAR (206 aa)). Cys-79 (nucleophile) is an active-site residue. Residues His-181 and Glu-183 contribute to the active site.

As to quaternary structure, heterodimer of HisH and HisF.

The protein localises to the cytoplasm. The enzyme catalyses 5-[(5-phospho-1-deoxy-D-ribulos-1-ylimino)methylamino]-1-(5-phospho-beta-D-ribosyl)imidazole-4-carboxamide + L-glutamine = D-erythro-1-(imidazol-4-yl)glycerol 3-phosphate + 5-amino-1-(5-phospho-beta-D-ribosyl)imidazole-4-carboxamide + L-glutamate + H(+). It catalyses the reaction L-glutamine + H2O = L-glutamate + NH4(+). It participates in amino-acid biosynthesis; L-histidine biosynthesis; L-histidine from 5-phospho-alpha-D-ribose 1-diphosphate: step 5/9. Functionally, IGPS catalyzes the conversion of PRFAR and glutamine to IGP, AICAR and glutamate. The HisH subunit catalyzes the hydrolysis of glutamine to glutamate and ammonia as part of the synthesis of IGP and AICAR. The resulting ammonia molecule is channeled to the active site of HisF. The polypeptide is Imidazole glycerol phosphate synthase subunit HisH (Streptococcus sanguinis (strain SK36)).